The chain runs to 94 residues: Conotoxin Qc6.1 (94 aa).

A signal peptide spans 1–22 (MKLTCMMIVALLFLTAWTFVTA). The propeptide occupies 23-62 (VDSKNELENRGGWGQAGGWGKLFPMARDEMKNSEVSKLDN). 3 cysteine pairs are disulfide-bonded: Cys66-Cys84, Cys73-Cys88, and Cys83-Cys92.

The protein belongs to the conotoxin O1 superfamily. Expressed by the venom duct.

It localises to the secreted. This chain is Conotoxin Qc6.1, found in Conus quercinus (Oak cone).